The sequence spans 136 residues: Large ribosomal subunit protein eL27 (136 aa).

The protein belongs to the eukaryotic ribosomal protein eL27 family.

This chain is Large ribosomal subunit protein eL27 (RPL27), found in Candida albicans (Yeast).